We begin with the raw amino-acid sequence, 431 residues long: 3-phosphoshikimate 1-carboxyvinyltransferase (431 aa).

The 3-phosphoshikimate site is built by Lys-20, Ser-21, and Arg-25. Residue Lys-20 coordinates phosphoenolpyruvate. Phosphoenolpyruvate-binding residues include Gly-91 and Arg-119. Residues Ser-164, Gln-166, Asp-317, and Lys-344 each contribute to the 3-phosphoshikimate site. Position 166 (Gln-166) interacts with phosphoenolpyruvate. Asp-317 (proton acceptor) is an active-site residue. The phosphoenolpyruvate site is built by Arg-348 and Arg-390.

The protein belongs to the EPSP synthase family. Monomer.

It localises to the cytoplasm. The catalysed reaction is 3-phosphoshikimate + phosphoenolpyruvate = 5-O-(1-carboxyvinyl)-3-phosphoshikimate + phosphate. Its pathway is metabolic intermediate biosynthesis; chorismate biosynthesis; chorismate from D-erythrose 4-phosphate and phosphoenolpyruvate: step 6/7. Functionally, catalyzes the transfer of the enolpyruvyl moiety of phosphoenolpyruvate (PEP) to the 5-hydroxyl of shikimate-3-phosphate (S3P) to produce enolpyruvyl shikimate-3-phosphate and inorganic phosphate. This is 3-phosphoshikimate 1-carboxyvinyltransferase from Aquifex aeolicus (strain VF5).